Reading from the N-terminus, the 602-residue chain is Sensor histidine kinase AtsR (602 aa).

Transmembrane regions (helical) follow at residues 11-31 and 182-202; these read IIVALGSLWILGFAAWAFLLF and AIVMLGGVLGVILGALFLLLF. The Histidine kinase domain maps to 242–461; the sequence is MVSHELRTPL…EFVVTLPVEL (220 aa). The residue at position 245 (His245) is a Phosphohistidine; by autocatalysis. The region spanning 484–601 is the Response regulatory domain; sequence HALVVDDNEN…TLNGIVSRLR (118 aa). Asp533 is subject to 4-aspartylphosphate.

It localises to the cell inner membrane. The enzyme catalyses ATP + protein L-histidine = ADP + protein N-phospho-L-histidine.. Member of a two-component regulatory system involved in control of gene expression; inhibits synthesis of (at least) the polyketide antibiotic thailandamide. Its two-component partner may be BTH_I0635. The polypeptide is Sensor histidine kinase AtsR (Burkholderia thailandensis (strain ATCC 700388 / DSM 13276 / CCUG 48851 / CIP 106301 / E264)).